Here is a 640-residue protein sequence, read N- to C-terminus: Chaperone protein DnaK (640 aa).

Thr199 is subject to Phosphothreonine; by autocatalysis. The interval Tyr603–Ser640 is disordered. A compositionally biased stretch (basic and acidic residues) spans Gln611–Glu621. Residues Glu622–Val632 show a composition bias toward acidic residues.

Belongs to the heat shock protein 70 family.

Functionally, acts as a chaperone. The polypeptide is Chaperone protein DnaK (Nitrosococcus oceani (strain ATCC 19707 / BCRC 17464 / JCM 30415 / NCIMB 11848 / C-107)).